The following is a 327-amino-acid chain: Phenylalanine--tRNA ligase alpha subunit (327 aa).

Glu252 is a binding site for Mg(2+).

It belongs to the class-II aminoacyl-tRNA synthetase family. Phe-tRNA synthetase alpha subunit type 1 subfamily. In terms of assembly, tetramer of two alpha and two beta subunits. The cofactor is Mg(2+).

It localises to the cytoplasm. It catalyses the reaction tRNA(Phe) + L-phenylalanine + ATP = L-phenylalanyl-tRNA(Phe) + AMP + diphosphate + H(+). The sequence is that of Phenylalanine--tRNA ligase alpha subunit from Salmonella choleraesuis (strain SC-B67).